A 461-amino-acid chain; its full sequence is B3 domain-containing protein REM9 (461 aa).

The TF-B3 1 DNA-binding region spans 11–103 (NQHFFQPLLP…VFHVTALGPS (93 aa)). The interval 110 to 146 (PQSSRHEEGEESGENEISEKEGEENVQKESDKSSSDL) is disordered. The span at 126 to 143 (ISEKEGEENVQKESDKSS) shows a compositional bias: basic and acidic residues. DNA-binding regions (TF-B3) lie at residues 148–244 (CFSQ…CSRT) and 230–332 (LQKA…EQPS). The segment at 333–415 (FKAEDGRHKR…SGIEGNLQHT (83 aa)) is disordered. Basic and acidic residues predominate over residues 384 to 394 (PKVEIREKIAE). Over residues 400–415 (RASNKSSGIEGNLQHT) the composition is skewed to polar residues.

The protein localises to the nucleus. The sequence is that of B3 domain-containing protein REM9 (REM9) from Arabidopsis thaliana (Mouse-ear cress).